The following is a 238-amino-acid chain: Large ribosomal subunit protein uL2 (238 aa).

The tract at residues 197-219 (ASDHPFGGKRHSNHSKPFTVSKW) is disordered.

It belongs to the universal ribosomal protein uL2 family. In terms of assembly, part of the 50S ribosomal subunit. Forms a bridge to the 30S subunit in the 70S ribosome.

In terms of biological role, one of the primary rRNA binding proteins. Required for association of the 30S and 50S subunits to form the 70S ribosome, for tRNA binding and peptide bond formation. It has been suggested to have peptidyltransferase activity; this is somewhat controversial. Makes several contacts with the 16S rRNA in the 70S ribosome. The protein is Large ribosomal subunit protein uL2 of Nanoarchaeum equitans (strain Kin4-M).